Reading from the N-terminus, the 214-residue chain is tRNA (guanine-N(7)-)-methyltransferase (214 aa).

The S-adenosyl-L-methionine site is built by aspartate 35, glutamate 60, asparagine 87, and aspartate 113. Residue aspartate 113 is part of the active site. Substrate-binding residues include lysine 117 and aspartate 149.

Belongs to the class I-like SAM-binding methyltransferase superfamily. TrmB family.

It carries out the reaction guanosine(46) in tRNA + S-adenosyl-L-methionine = N(7)-methylguanosine(46) in tRNA + S-adenosyl-L-homocysteine. Its pathway is tRNA modification; N(7)-methylguanine-tRNA biosynthesis. Functionally, catalyzes the formation of N(7)-methylguanine at position 46 (m7G46) in tRNA. This Prochlorococcus marinus (strain NATL1A) protein is tRNA (guanine-N(7)-)-methyltransferase.